The primary structure comprises 72 residues: Protein P13 (72 aa).

It localises to the virion membrane. The polypeptide is Protein P13 (P13) (Pseudomonas phage phi6 (Bacteriophage phi-6)).